The following is a 170-amino-acid chain: 4-hydroxyphenylacetate 3-monooxygenase reductase component (170 aa).

The protein belongs to the non-flavoprotein flavin reductase family. HpaC subfamily. As to quaternary structure, homodimer. 4-HPA 3-monooxygenase consists of a reductase component HpaC and an oxygenase component HpaB.

It carries out the reaction a reduced flavin + NAD(+) = an oxidized flavin + NADH + 2 H(+). The protein operates within aromatic compound metabolism; 4-hydroxyphenylacetate degradation; pyruvate and succinate semialdehyde from 4-hydroxyphenylacetate: step 1/7. Catalyzes the reduction of free flavins (FMN, FAD and riboflavin) by NADH. Subsequently, the reduced flavins diffuse to the large HpaB component or to other electron acceptors such as cytochrome c and Fe(3+) ion. The protein is 4-hydroxyphenylacetate 3-monooxygenase reductase component (hpaC) of Salmonella dublin.